A 388-amino-acid polypeptide reads, in one-letter code: Succinate--CoA ligase [ADP-forming] subunit beta (388 aa).

The ATP-grasp domain maps to 9–244; it reads KQLFAEYGLP…PSQEDEREAH (236 aa). Residues Lys-46, 53 to 55, Glu-99, Thr-102, and Glu-107 contribute to the ATP site; that span reads GRG. Mg(2+) contacts are provided by Asn-199 and Asp-213. Residues Asn-264 and 321–323 each bind substrate; that span reads GIV.

This sequence belongs to the succinate/malate CoA ligase beta subunit family. As to quaternary structure, heterotetramer of two alpha and two beta subunits. The cofactor is Mg(2+).

The catalysed reaction is succinate + ATP + CoA = succinyl-CoA + ADP + phosphate. It catalyses the reaction GTP + succinate + CoA = succinyl-CoA + GDP + phosphate. Its pathway is carbohydrate metabolism; tricarboxylic acid cycle; succinate from succinyl-CoA (ligase route): step 1/1. Succinyl-CoA synthetase functions in the citric acid cycle (TCA), coupling the hydrolysis of succinyl-CoA to the synthesis of either ATP or GTP and thus represents the only step of substrate-level phosphorylation in the TCA. The beta subunit provides nucleotide specificity of the enzyme and binds the substrate succinate, while the binding sites for coenzyme A and phosphate are found in the alpha subunit. The polypeptide is Succinate--CoA ligase [ADP-forming] subunit beta (Marinomonas sp. (strain MWYL1)).